The following is a 1286-amino-acid chain: CLIP-associating protein 2 (1286 aa).

The interval 1–40 (MRRLICKRICDYKSFDDEESVDGNRPSSAASAFKVPAPKT) is golgi localization. Residues S14 and S20 each carry the phosphoserine modification. The interval 17 to 70 (DEESVDGNRPSSAASAFKVPAPKTPGNPVNSARKPGSAGGPKAGGTSKEGGAGA) is disordered. Positions 53–69 (SAGGPKAGGTSKEGGAG) are enriched in gly residues. The segment at 66 to 317 (GGAGAVDEDD…KSLQTYLKSS (252 aa)) is TOG 1. 3 HEAT repeats span residues 179 to 214 (HGAE…IRHT), 215 to 251 (HVPR…EWQT), and 256 to 293 (RHAA…HFPG). Disordered regions lie at residues 320-350 (VASL…TANP) and 355-374 (GRVS…LQRS). Residues S322, S333, and S336 each carry the phosphoserine modification. Residues 322–340 (SLPQSDRSSSSSQESLNRP) show a composition bias toward low complexity. The span at 341–350 (FSSKWSTANP) shows a compositional bias: polar residues. S374, S376, and S413 each carry phosphoserine. Residues 410–473 (SYASLEDTSD…GSRSGSPGRV (64 aa)) are disordered. Over residues 417-431 (TSDKMDGTASEDGRV) the composition is skewed to basic and acidic residues. Residues 450–565 (RGRSRTKMVS…GPGYGMSQSS (116 aa)) form an interaction with microtubules, MAPRE1 and MAPRE3 region. Over residues 459–473 (SQSQPGSRSGSPGRV) the composition is skewed to low complexity. A phosphoserine mark is found at S461, S465, S469, S484, and S495. Residues 492-566 (NSASAQKRSK…PGYGMSQSSR (75 aa)) form a disordered region. An SXIP motif 1; mediates interaction with MAPRE1 and targeting to microtubule plus ends motif is present at residues 500-503 (SKIP). S513 carries the phosphoserine modification. Residues 523–526 (SRIP) carry the SXIP motif 2; mediates interaction with MAPRE1 and targeting to microtubule plus ends motif. 7 positions are modified to phosphoserine: S531, S535, S570, S572, S581, S614, and S620. Over residues 606–616 (RYESYGMHSDD) the composition is skewed to basic and acidic residues. Residues 606–638 (RYESYGMHSDDDANSDASSACSERSYSSRNGSI) form a disordered region. Residues 620 to 634 (SDASSACSERSYSSR) are compositionally biased toward low complexity. Residues 642 to 873 (MRQTEDVAEV…TKLLHNHLRN (232 aa)) form a TOG 2 region. HEAT repeat units lie at residues 702-739 (KVFS…KMGA) and 764-801 (LQFN…QMDP). T779 carries the post-translational modification Phosphothreonine. Residues 864-1286 (TKLLHNHLRN…DPTTDVSGQS (423 aa)) are interaction with RSN and localization to the Golgi and kinetochores. Disordered regions lie at residues 870–920 (HLRN…FDYD) and 944–990 (SFRS…QPAL). Polar residues-rich tracts occupy residues 872–884 (RNTG…SMGS) and 893–914 (SPAN…TLSP). The residue at position 884 (S884) is a Phosphoserine. Phosphoserine occurs at positions 944, 947, 1005, and 1021. Residues 947–964 (SQEDMSEPLKRDPKKEDG) show a composition bias toward basic and acidic residues. The interval 1009–1286 (RDYNPYNYSD…DPTTDVSGQS (278 aa)) is required for cortical localization. HEAT repeat units follow at residues 1046–1083 (LDHS…TQEE), 1090–1127 (EHFK…HQPA), and 1208–1245 (LLLP…VIGD).

This sequence belongs to the CLASP family. In terms of assembly, interacts with microtubules. Interacts with MAPRE1; probably required for targeting to the growing microtubule plus ends. Interacts with CLIP2, ERC1, MAPRE3, PHLDB2 and RSN. The interaction with ERC1 may be mediated by PHLDB2. Interacts with GCC2; recruits CLASP2 to Golgi membranes. Interacts with MACF1. Interacts with SOGA1 and MTCL1. Phosphorylated by GSK3B. Phosphorylation by GSK3B may negatively regulate binding to microtubule lattices in lamella.

The protein resides in the cytoplasm. It is found in the cytoskeleton. Its subcellular location is the microtubule organizing center. It localises to the centrosome. The protein localises to the chromosome. The protein resides in the centromere. It is found in the kinetochore. Its subcellular location is the spindle. It localises to the golgi apparatus. The protein localises to the trans-Golgi network. The protein resides in the cell membrane. It is found in the cell projection. Its subcellular location is the ruffle membrane. It localises to the cell cortex. Functionally, microtubule plus-end tracking protein that promotes the stabilization of dynamic microtubules. Involved in the nucleation of noncentrosomal microtubules originating from the trans-Golgi network (TGN). Required for the polarization of the cytoplasmic microtubule arrays in migrating cells towards the leading edge of the cell. May act at the cell cortex to enhance the frequency of rescue of depolymerizing microtubules by attaching their plus-ends to cortical platforms composed of ERC1 and PHLDB2. This cortical microtubule stabilizing activity is regulated at least in part by phosphatidylinositol 3-kinase signaling. Also performs a similar stabilizing function at the kinetochore which is essential for the bipolar alignment of chromosomes on the mitotic spindle. Acts as a mediator of ERBB2-dependent stabilization of microtubules at the cell cortex. The protein is CLIP-associating protein 2 (Clasp2) of Rattus norvegicus (Rat).